Reading from the N-terminus, the 83-residue chain is Delta-conotoxin-like Ac6.1 (83 aa).

The first 22 residues, M1–A22, serve as a signal peptide directing secretion. The propeptide occupies D23–R51. 3 cysteine pairs are disulfide-bonded: C54–C69, C61–C73, and C68–C78. A 4-hydroxyproline mark is found at P57 and P65.

This sequence belongs to the conotoxin O1 superfamily. In terms of tissue distribution, expressed by the venom duct.

It is found in the secreted. Its function is as follows. Delta-conotoxins bind to site 6 of voltage-gated sodium channels (Nav) and inhibit the inactivation process. In Conus achatinus (Little frog cone), this protein is Delta-conotoxin-like Ac6.1.